A 166-amino-acid polypeptide reads, in one-letter code: Ribosome maturation factor RimM (166 aa).

The region spanning 94–166 (GDEYYWRDLM…EMVVRLLPGL (73 aa)) is the PRC barrel domain.

This sequence belongs to the RimM family. As to quaternary structure, binds ribosomal protein uS19.

The protein resides in the cytoplasm. Its function is as follows. An accessory protein needed during the final step in the assembly of 30S ribosomal subunit, possibly for assembly of the head region. Essential for efficient processing of 16S rRNA. May be needed both before and after RbfA during the maturation of 16S rRNA. It has affinity for free ribosomal 30S subunits but not for 70S ribosomes. This is Ribosome maturation factor RimM from Syntrophus aciditrophicus (strain SB).